We begin with the raw amino-acid sequence, 323 residues long: Aquaporin-4 (323 aa).

The Cytoplasmic portion of the chain corresponds to 1–36 (MSDRPAARRWGKCGPLCTRESIMVAFKGVWTQTFWK). S-palmitoyl cysteine attachment occurs at residues C13 and C17. Residues 37 to 57 (AVTAEFLAMLIFVLLSLGSTI) traverse the membrane as a helical segment. At 58–69 (NWGGAEKPLPVD) the chain is on the extracellular side. The chain crosses the membrane as a helical span at residues 70–89 (MVLISLCFGLSIATMVQCFG). The Cytoplasmic portion of the chain corresponds to 90–93 (HISG). The discontinuously helical intramembrane region spans 94–101 (GHINPAVT). Positions 97–99 (NPA) match the NPA 1 motif. At 102-115 (VAMVCTRRISIAKS) the chain is on the cytoplasmic side. S111 carries the post-translational modification Phosphoserine; by PKG. Residues 116 to 136 (VFYIAAQCLGAIIGAGILYLV) traverse the membrane as a helical segment. Over 137 to 155 (TPPSVVGGLGVTTVHGNLS) the chain is Extracellular. The N-linked (GlcNAc...) asparagine glycan is linked to N153. Residues 156–176 (AGHGLLVELIITFQLVFTIFA) traverse the membrane as a helical segment. Residues 177 to 184 (SCDSKRTD) are Cytoplasmic-facing. A Phosphoserine; by PKC modification is found at S180. The chain crosses the membrane as a helical span at residues 185–205 (VTGSIALAIGISVAIGHLFAI). An N-linked (GlcNAc...) asparagine glycan is attached at N206. The Extracellular segment spans residues 206 to 208 (NYT). An intramembrane region (discontinuously helical) is located at residues 209 to 222 (GASMNPARSFGPAV). An NPA 2 motif is present at residues 213-215 (NPA). At 223–231 (IMGNWENHW) the chain is on the extracellular side. The chain crosses the membrane as a helical span at residues 232–252 (IYWVGPIIGAVLAGGLYEYVF). Residues 253 to 323 (CPDVELKRRF…DPSGEVLSSV (71 aa)) lie on the Cytoplasmic side of the membrane. 2 positions are modified to phosphoserine: S276 and S285. T289 is modified (phosphothreonine). A Phosphoserine modification is found at S321.

It belongs to the MIP/aquaporin (TC 1.A.8) family. In terms of assembly, homotetramer. The tetramers can form oligomeric arrays in membranes. The size of the oligomers differs between tissues and is smaller in skeletal muscle than in brain. Interaction between AQP4 oligomeric arrays in close-by cells can contribute to cell-cell adhesion. Part of a complex containing MLC1, TRPV4, HEPACAM and ATP1B1. In terms of processing, phosphorylation by PKC at Ser-180 reduces conductance by 50%. Phosphorylation by PKG at Ser-111 in response to glutamate increases conductance by 40%. Post-translationally, isoform 2: Palmitoylated on its N-terminal region. Isoform 1: Not palmitoylated. As to expression, detected in brain and lung.

Its subcellular location is the cell membrane. It is found in the basolateral cell membrane. It localises to the endosome membrane. The protein localises to the sarcolemma. The protein resides in the cell projection. The catalysed reaction is H2O(in) = H2O(out). Its function is as follows. Forms a water-specific channel. Plays an important role in brain water homeostasis and in glymphatic solute transport. Required for a normal rate of water exchange across the blood brain interface. Required for normal levels of cerebrospinal fluid influx into the brain cortex and parenchyma along paravascular spaces that surround penetrating arteries, and for normal drainage of interstitial fluid along paravenous drainage pathways. Thereby, it is required for normal clearance of solutes from the brain interstitial fluid, including soluble beta-amyloid peptides derived from APP. Plays a redundant role in urinary water homeostasis and urinary concentrating ability. In Bos taurus (Bovine), this protein is Aquaporin-4 (AQP4).